Consider the following 715-residue polypeptide: Palmitoyltransferase ZDHHC5 (715 aa).

Over 1-13 (MPAESGKRFKPSK) the chain is Cytoplasmic. The helical transmembrane segment at 14-34 (YVPVSAAAIFLVGATTLFFAF) threads the bilayer. Topologically, residues 35–52 (TCPGLSLDVSPAVPIYNA) are extracellular. The helical transmembrane segment at 53–73 (IMFLFVLANFSMATFMDPGIF) threads the bilayer. Residues 74-148 (PRAEEDEDKE…NCIGRRNYRY (75 aa)) are Cytoplasmic-facing. Phosphotyrosine is present on Tyr-91. The DHHC domain maps to 104 to 154 (KWCATCRFYRPPRCSHCSVCDNCVEEFDHHCPWVNNCIGRRNYRYFFLFLL). Cys-134 serves as the catalytic S-palmitoyl cysteine intermediate. The helical transmembrane segment at 149–169 (FFLFLLSLTAHIMGVFGFGLL) threads the bilayer. Topologically, residues 170 to 191 (YVLCHIEELSGVRTAVTMAVMC) are extracellular. Residues 192–212 (VAGLFFIPVAGLTGFHVVLVA) form a helical membrane-spanning segment. The Cytoplasmic segment spans residues 213–715 (RGRTTNEQVT…VGGTTYEISV (503 aa)). The residue at position 247 (Ser-247) is a Phosphoserine. Residues 289-715 (GELRRTKSKG…VGGTTYEISV (427 aa)) are disordered. Thr-294 carries the post-translational modification Phosphothreonine. Ser-296 and Ser-299 each carry phosphoserine. Thr-303 bears the Phosphothreonine mark. Ser-345 carries the post-translational modification Phosphoserine. Phosphothreonine is present on residues Thr-348 and Thr-350. The segment covering 359-373 (SSSSTSAAMPHSSSA) has biased composition (low complexity). 4 positions are modified to phosphoserine: Ser-380, Ser-398, Ser-406, and Ser-409. A Phosphothreonine modification is found at Thr-411. Residues Ser-415, Ser-425, Ser-429, and Ser-432 each carry the phosphoserine modification. The segment covering 422 to 432 (SSGSRSSSLKS) has biased composition (low complexity). A Phosphothreonine modification is found at Thr-436. A compositionally biased stretch (polar residues) spans 442-478 (QLQSIRSEGTTSTSYKSLANQTRNGSLSYDSLLTPSD). 2 positions are modified to phosphoserine: Ser-529 and Ser-554. The span at 581-597 (PRTSSSSDDSKRSPLSK) shows a compositional bias: low complexity. Residue Arg-617 is modified to Omega-N-methylarginine. Phosphoserine is present on Ser-621. At Thr-659 the chain carries Phosphothreonine. Residues 666-677 (LKTTYSKSNGQP) are compositionally biased toward polar residues. Ser-684 and Ser-694 each carry phosphoserine. Arg-697 is subject to Omega-N-methylarginine.

This sequence belongs to the DHHC palmitoyltransferase family. ERF2/ZDHHC9 subfamily. Post-translationally, autopalmitoylated. Palmitoylation of the C-terminal tail regulates stimulation-dependent plasma membrane motility. In terms of processing, phosphorylation regulates association with endocytic proteins and its subcellular localization. Phosphorylation by LYN during fatty acid uptake leads to inactivation of the activity.

The protein resides in the cell membrane. It catalyses the reaction L-cysteinyl-[protein] + hexadecanoyl-CoA = S-hexadecanoyl-L-cysteinyl-[protein] + CoA. Functionally, palmitoyltransferase that catalyzes the addition of palmitate onto various protein substrates such as CTNND2, CD36, GSDMD, NLRP3, NOD1, NOD2, STAT3 and S1PR1 thus plays a role in various biological processes including cell adhesion, inflammation, fatty acid uptake, bacterial sensing or cardiac functions. Plays an important role in the regulation of synapse efficacy by mediating palmitoylation of delta-catenin/CTNND2, thereby increasing synaptic delivery and surface stabilization of alpha-amino-3-hydroxy-5-methyl-4-isoxazole propionic acid receptors (AMPARs). Under basal conditions, remains at the synaptic membrane through FYN-mediated phosphorylation that prevents association with endocytic proteins. Neuronal activity enhances the internalization and trafficking of DHHC5 from spines to dendritic shafts where it palmitoylates delta-catenin/CTNND2. Regulates cell adhesion at the plasma membrane by palmitoylating GOLGA7B and DSG2. Plays a role in innate immune response by mediating the palmitoylation of NOD1 and NOD2 and their proper recruitment to the bacterial entry site and phagosomes. Also participates in fatty acid uptake by palmitoylating CD36 and thereby targeting it to the plasma membrane. Upon binding of fatty acids to CD36, gets phosphorylated by LYN leading to inactivation and subsequent CD36 caveolar endocytosis. Controls oligodendrocyte development by catalyzing STAT3 palmitoylation. Acts as a regulator of inflammatory response by mediating palmitoylation of NLRP3 and GSDMD. Palmitoylates NLRP3 to promote inflammasome assembly and activation. Activates pyroptosis by catalyzing palmitoylation of gasdermin-D (GSDMD), thereby promoting membrane translocation and pore formation of GSDMD. This chain is Palmitoyltransferase ZDHHC5 (Zdhhc5), found in Rattus norvegicus (Rat).